A 602-amino-acid chain; its full sequence is Aspartate--tRNA(Asp/Asn) ligase (602 aa).

Residue Glu175 participates in L-aspartate binding. The segment at 199–202 (QIFK) is aspartate. Residue Arg221 participates in L-aspartate binding. ATP contacts are provided by residues 221-223 (RDE) and Gln230. L-aspartate is bound at residue His458. Glu492 lines the ATP pocket. Arg499 is an L-aspartate binding site. 544 to 547 (GLDR) lines the ATP pocket.

It belongs to the class-II aminoacyl-tRNA synthetase family. Type 1 subfamily. In terms of assembly, homodimer.

The protein resides in the cytoplasm. The catalysed reaction is tRNA(Asx) + L-aspartate + ATP = L-aspartyl-tRNA(Asx) + AMP + diphosphate. In terms of biological role, aspartyl-tRNA synthetase with relaxed tRNA specificity since it is able to aspartylate not only its cognate tRNA(Asp) but also tRNA(Asn). Reaction proceeds in two steps: L-aspartate is first activated by ATP to form Asp-AMP and then transferred to the acceptor end of tRNA(Asp/Asn). The polypeptide is Aspartate--tRNA(Asp/Asn) ligase (Cupriavidus pinatubonensis (strain JMP 134 / LMG 1197) (Cupriavidus necator (strain JMP 134))).